The chain runs to 337 residues: 2-ketoarginine methyltransferase (337 aa).

This sequence belongs to the 2-ketoarginine methyltransferase family.

It catalyses the reaction 5-guanidino-2-oxopentanoate + S-adenosyl-L-methionine = (3R)-5-guanidino-3-methyl-2-oxopentanoate + S-adenosyl-L-homocysteine + H(+). The protein operates within antibiotic biosynthesis. In terms of biological role, S-adenosyl-L-methionine-dependent methyltransferase involved in the formation of the rare amino acid 3-methylarginine (MeArg), which is incorporated into the peptidyl nucleoside antibiotic arginomycin. Transfers the methyl group from S-adenosyl-L-methionine into 5-guanidino-2-oxopentanoate acid to yield 5-guanidino-3-methyl-2-oxopentanoate, a precursor of MeArg. This is 2-ketoarginine methyltransferase from Streptomyces arginensis.